The chain runs to 843 residues: Pentatricopeptide repeat-containing protein At4g21880, mitochondrial (843 aa).

PPR repeat units lie at residues 392 to 426 (SSTS…GLVI), 427 to 461 (SANI…SVKP), 462 to 496 (NSET…NLAP), 497 to 531 (NSSM…DVKP), 532 to 562 (DSVT…AGVE), 564 to 594 (NKHV…LEVP), and 598 to 632 (HNEL…RCPV).

The protein belongs to the PPR family. P subfamily.

The protein localises to the mitochondrion. This Arabidopsis thaliana (Mouse-ear cress) protein is Pentatricopeptide repeat-containing protein At4g21880, mitochondrial.